Consider the following 130-residue polypeptide: Small ribosomal subunit protein uS11 (130 aa).

The protein belongs to the universal ribosomal protein uS11 family. As to quaternary structure, part of the 30S ribosomal subunit. Interacts with proteins S7 and S18. Binds to IF-3.

In terms of biological role, located on the platform of the 30S subunit, it bridges several disparate RNA helices of the 16S rRNA. Forms part of the Shine-Dalgarno cleft in the 70S ribosome. The sequence is that of Small ribosomal subunit protein uS11 from Acholeplasma laidlawii (strain PG-8A).